The following is a 334-amino-acid chain: Leucine carboxyl methyltransferase 1 (334 aa).

S-adenosyl-L-methionine-binding positions include Lys37, Arg73, Gly98, Asp122, 171 to 172, and Glu198; that span reads DL.

Belongs to the methyltransferase superfamily. LCMT family.

It carries out the reaction [phosphatase 2A protein]-C-terminal L-leucine + S-adenosyl-L-methionine = [phosphatase 2A protein]-C-terminal L-leucine methyl ester + S-adenosyl-L-homocysteine. In terms of biological role, methylates the carboxyl group of the C-terminal leucine residue of protein phosphatase 2A catalytic subunits to form alpha-leucine ester residues. The sequence is that of Leucine carboxyl methyltransferase 1 (LCMT1) from Homo sapiens (Human).